The sequence spans 844 residues: Protein translocase subunit SecA (844 aa).

ATP-binding positions include Q89, 107–111 (GEGKT), and D497. C829, C831, C840, and H841 together coordinate Zn(2+).

Belongs to the SecA family. In terms of assembly, monomer and homodimer. Part of the essential Sec protein translocation apparatus which comprises SecA, SecYEG and auxiliary proteins SecDF. Other proteins may also be involved. Zn(2+) is required as a cofactor.

Its subcellular location is the cell membrane. The protein localises to the cytoplasm. It carries out the reaction ATP + H2O + cellular proteinSide 1 = ADP + phosphate + cellular proteinSide 2.. Functionally, part of the Sec protein translocase complex. Interacts with the SecYEG preprotein conducting channel. Has a central role in coupling the hydrolysis of ATP to the transfer of proteins into and across the cell membrane, serving as an ATP-driven molecular motor driving the stepwise translocation of polypeptide chains across the membrane. This Streptococcus suis (strain 98HAH33) protein is Protein translocase subunit SecA.